The chain runs to 919 residues: Isoleucine--tRNA ligase (919 aa).

Positions 57–67 (PYANGHTHIGH) match the 'HIGH' region motif. Glu-569 contacts L-isoleucyl-5'-AMP. The short motif at 610–614 (KMSKS) is the 'KMSKS' region element. ATP is bound at residue Lys-613. Residues Cys-895, Cys-898, Cys-910, and Cys-913 each coordinate Zn(2+).

Belongs to the class-I aminoacyl-tRNA synthetase family. IleS type 1 subfamily. Monomer. It depends on Zn(2+) as a cofactor.

The protein resides in the cytoplasm. The catalysed reaction is tRNA(Ile) + L-isoleucine + ATP = L-isoleucyl-tRNA(Ile) + AMP + diphosphate. Functionally, catalyzes the attachment of isoleucine to tRNA(Ile). As IleRS can inadvertently accommodate and process structurally similar amino acids such as valine, to avoid such errors it has two additional distinct tRNA(Ile)-dependent editing activities. One activity is designated as 'pretransfer' editing and involves the hydrolysis of activated Val-AMP. The other activity is designated 'posttransfer' editing and involves deacylation of mischarged Val-tRNA(Ile). This chain is Isoleucine--tRNA ligase, found in Sulfurimonas denitrificans (strain ATCC 33889 / DSM 1251) (Thiomicrospira denitrificans (strain ATCC 33889 / DSM 1251)).